The following is an 859-amino-acid chain: DNA mismatch repair protein MutS (859 aa).

612–619 (GPNMGGKS) provides a ligand contact to ATP. The segment at 797-822 (SKPLAPSATPPSSYAAPSPAAAPAQA) is disordered.

It belongs to the DNA mismatch repair MutS family.

In terms of biological role, this protein is involved in the repair of mismatches in DNA. It is possible that it carries out the mismatch recognition step. This protein has a weak ATPase activity. This chain is DNA mismatch repair protein MutS, found in Alcanivorax borkumensis (strain ATCC 700651 / DSM 11573 / NCIMB 13689 / SK2).